A 241-amino-acid polypeptide reads, in one-letter code: Interleukin-6 (241 aa).

The segment at 1–25 (MNFTEGCEATGRRPGSAGSRRRRAP) is disordered. The N-terminal stretch at 1–46 (MNFTEGCEATGRRPGSAGSRRRRAPRPGPVALLPLLLPLLLPPAAA) is a signal peptide. Cys-122 and Cys-132 are disulfide-bonded.

This sequence belongs to the IL-6 superfamily. Component of a hexamer of two molecules each of IL6, IL6R and IL6ST; first binds to IL6R to associate with the signaling subunit IL6ST.

The protein resides in the secreted. Functionally, cytokine with a wide variety of biological functions in immunity, tissue regeneration, and metabolism. Binds to IL6R, then the complex associates to the signaling subunit IL6ST/gp130 to trigger the intracellular IL6-signaling pathway. The interaction with the membrane-bound IL6R and IL6ST stimulates 'classic signaling', whereas the binding of IL6 and soluble IL6R to IL6ST stimulates 'trans-signaling'. Alternatively, 'cluster signaling' occurs when membrane-bound IL6:IL6R complexes on transmitter cells activate IL6ST receptors on neighboring receiver cells. The polypeptide is Interleukin-6 (IL6) (Gallus gallus (Chicken)).